The following is a 405-amino-acid chain: 8-amino-7-oxononanoate synthase (405 aa).

Residue Arg-23 coordinates substrate. Residue 114 to 115 (GY) participates in pyridoxal 5'-phosphate binding. A substrate-binding site is contributed by His-139. Residues Ser-185, His-213, and Thr-245 each contribute to the pyridoxal 5'-phosphate site. Lys-248 carries the N6-(pyridoxal phosphate)lysine modification. Residue Thr-366 coordinates substrate.

This sequence belongs to the class-II pyridoxal-phosphate-dependent aminotransferase family. BioF subfamily. In terms of assembly, homodimer. It depends on pyridoxal 5'-phosphate as a cofactor.

The enzyme catalyses 6-carboxyhexanoyl-[ACP] + L-alanine + H(+) = (8S)-8-amino-7-oxononanoate + holo-[ACP] + CO2. It participates in cofactor biosynthesis; biotin biosynthesis. Functionally, catalyzes the decarboxylative condensation of pimeloyl-[acyl-carrier protein] and L-alanine to produce 8-amino-7-oxononanoate (AON), [acyl-carrier protein], and carbon dioxide. The sequence is that of 8-amino-7-oxononanoate synthase from Delftia acidovorans (strain DSM 14801 / SPH-1).